The chain runs to 689 residues: Protein SDA1 homolog (689 aa).

3 disordered regions span residues 227–260, 485–512, and 623–689; these read DEKK…TKNK, EQEK…DGEW, and TDRK…RLMK. Residues 258–319 adopt a coiled-coil conformation; the sequence is KNKKKLDKAM…RFEVKLMHMD (62 aa). Acidic residues predominate over residues 492 to 512; that stretch reads PEEDDGWESASLSDDDEDGEW. Positions 670 to 681 are enriched in basic and acidic residues; the sequence is RDKQIALRDSLL.

The protein belongs to the SDA1 family.

It is found in the nucleus. The protein localises to the nucleolus. Required for 60S pre-ribosomal subunits export to the cytoplasm. The polypeptide is Protein SDA1 homolog (sdad1) (Xenopus laevis (African clawed frog)).